The sequence spans 265 residues: U6 snRNA phosphodiesterase 1 (265 aa).

The disordered stretch occupies residues 1–72 (MSAAPLVGYS…DSTKHGGRVR (72 aa)). The segment covering 20–31 (DGMRTRPGDGSH) has biased composition (basic and acidic residues). The active-site Proton acceptor is the His-120. Residue 120-122 (HLS) coordinates AMP. Residues Gln-164, Tyr-202, and 206 to 210 (SFHLS) contribute to the UMP site. AMP is bound by residues Tyr-202 and 204 to 210 (DPSFHLS). His-208 serves as the catalytic Proton donor.

Belongs to the 2H phosphoesterase superfamily. USB1 family. In terms of assembly, interacts with PLRG1, CDC5L and PRPF19.

The protein localises to the nucleus. The enzyme catalyses a 3'-end uridylyl-uridine-RNA = a 3'-end 2',3'-cyclophospho-uridine-RNA + uridine. The catalysed reaction is a 3'-end uridylyl-adenosine-RNA = a 3'-end 2',3'-cyclophospho-uridine-RNA + adenosine. Its activity is regulated as follows. 3'-5' RNA exonuclease activity is inhibited by a 3' phosphate terminated RNA. In terms of biological role, 3'-5' RNA exonuclease that trims the 3' end of oligo(U) and oligo(A) tracts of the pre-U6 small nuclear RNA (snRNA) molecule, leading to the formation of a mature U6 snRNA 3' end-terminated with a 2',3'-cyclic phosphate. Participates in the U6 snRNA 3' end processing that prevents U6 snRNA degradation. In addition also removes uridines from the 3' end of U6atac snRNA and possibly the vault RNA VTRNA1-1. In Homo sapiens (Human), this protein is U6 snRNA phosphodiesterase 1.